A 76-amino-acid chain; its full sequence is MSSGALLPKPQMRGLLAKRLRVHIVGAFVVALGVAAAYKFGVAEPRKKAYADFYRNYDSMKDFEEMRQAGVFQSAK.

The Mitochondrial matrix segment spans residues 4–14 (GALLPKPQMRG). A helical membrane pass occupies residues 15–55 (LLAKRLRVHIVGAFVVALGVAAAYKFGVAEPRKKAYADFYR). Residues 56 to 76 (NYDSMKDFEEMRQAGVFQSAK) are Mitochondrial intermembrane-facing. Residue S74 is modified to Phosphoserine.

The protein belongs to the cytochrome c oxidase subunit 6c family. Component of the cytochrome c oxidase (complex IV, CIV), a multisubunit enzyme composed of 14 subunits. The complex is composed of a catalytic core of 3 subunits MT-CO1, MT-CO2 and MT-CO3, encoded in the mitochondrial DNA, and 11 supernumerary subunits COX4I, COX5A, COX5B, COX6A, COX6B, COX6C, COX7A, COX7B, COX7C, COX8 and NDUFA4, which are encoded in the nuclear genome. The complex exists as a monomer or a dimer and forms supercomplexes (SCs) in the inner mitochondrial membrane with NADH-ubiquinone oxidoreductase (complex I, CI) and ubiquinol-cytochrome c oxidoreductase (cytochrome b-c1 complex, complex III, CIII), resulting in different assemblies (supercomplex SCI(1)III(2)IV(1) and megacomplex MCI(2)III(2)IV(2)).

Its subcellular location is the mitochondrion inner membrane. It functions in the pathway energy metabolism; oxidative phosphorylation. In terms of biological role, component of the cytochrome c oxidase, the last enzyme in the mitochondrial electron transport chain which drives oxidative phosphorylation. The respiratory chain contains 3 multisubunit complexes succinate dehydrogenase (complex II, CII), ubiquinol-cytochrome c oxidoreductase (cytochrome b-c1 complex, complex III, CIII) and cytochrome c oxidase (complex IV, CIV), that cooperate to transfer electrons derived from NADH and succinate to molecular oxygen, creating an electrochemical gradient over the inner membrane that drives transmembrane transport and the ATP synthase. Cytochrome c oxidase is the component of the respiratory chain that catalyzes the reduction of oxygen to water. Electrons originating from reduced cytochrome c in the intermembrane space (IMS) are transferred via the dinuclear copper A center (CU(A)) of subunit 2 and heme A of subunit 1 to the active site in subunit 1, a binuclear center (BNC) formed by heme A3 and copper B (CU(B)). The BNC reduces molecular oxygen to 2 water molecules using 4 electrons from cytochrome c in the IMS and 4 protons from the mitochondrial matrix. The sequence is that of Cytochrome c oxidase subunit 6C-2 (Cox6c2) from Rattus norvegicus (Rat).